A 260-amino-acid chain; its full sequence is uncharacterized protein (260 aa).

Positions 1-22 (MGYLKGFALYISILILIVFIAG) are cleaved as a signal peptide. Residue Cys-23 is the site of N-palmitoyl cysteine attachment. A lipid anchor (S-diacylglycerol cysteine) is attached at Cys-23.

It belongs to the staphylococcal tandem lipoprotein family.

It is found in the cell membrane. This is an uncharacterized protein from Staphylococcus aureus (strain MSSA476).